Reading from the N-terminus, the 439-residue chain is Nuclear distribution protein PAC1 (439 aa).

Residues 55–90 (NSIVRLQSKIMELEKNCEELQKSIDEQQSSTNQISN) adopt a coiled-coil conformation. WD repeat units follow at residues 106-145 (TLDASITALCLHPSLPIIFIGLDSGKLLRYDILNVELPLQ), 149-193 (AHMD…TLSH), 199-240 (GHEH…CIKS), 243-282 (PHTQWIRSLHVHGEFVLTGSNDSAIRLTHWPSGNGLSMGI), 295-335 (IPDP…FIPH), 355-392 (DHNSWVRDLRQFNDMLFSCSDDGSVKCWSLDWTNLSTT), and 402-438 (NKGFQNCLTLDNIAFTGLPSRKLLFSGSSEGTLTSFM).

This sequence belongs to the WD repeat LIS1/nudF family. In terms of assembly, self-associates. Interacts with NDL1 and dynein.

The protein localises to the cytoplasm. It localises to the cytoskeleton. It is found in the spindle pole. In terms of biological role, positively regulates the activity of the minus-end directed microtubule motor protein dynein. Plays a central role in positioning the mitotic spindle at the bud neck during cell division. Targets cytoplasmic dynein to microtubule plus ends, thereby promoting dynein-mediated microtubule sliding along the bud cortex and consequently the movement of the mitotic spindle to the bud neck. The chain is Nuclear distribution protein PAC1 from Kluyveromyces lactis (strain ATCC 8585 / CBS 2359 / DSM 70799 / NBRC 1267 / NRRL Y-1140 / WM37) (Yeast).